A 90-amino-acid polypeptide reads, in one-letter code: Translation initiation factor IF-1 (90 aa).

The S1-like domain occupies 7 to 76 (KEDVIRMEGT…TRGRIVYRKK (70 aa)).

Belongs to the IF-1 family. Component of the 30S ribosomal translation pre-initiation complex which assembles on the 30S ribosome in the order IF-2 and IF-3, IF-1 and N-formylmethionyl-tRNA(fMet); mRNA recruitment can occur at any time during PIC assembly.

The protein localises to the cytoplasm. One of the essential components for the initiation of protein synthesis. Stabilizes the binding of IF-2 and IF-3 on the 30S subunit to which N-formylmethionyl-tRNA(fMet) subsequently binds. Helps modulate mRNA selection, yielding the 30S pre-initiation complex (PIC). Upon addition of the 50S ribosomal subunit IF-1, IF-2 and IF-3 are released leaving the mature 70S translation initiation complex. This is Translation initiation factor IF-1 from Fervidobacterium nodosum (strain ATCC 35602 / DSM 5306 / Rt17-B1).